Reading from the N-terminus, the 279-residue chain is Zinc-finger homeodomain protein 1 (279 aa).

Residues 1–13 are compositionally biased toward acidic residues; the sequence is MDFDDHDDGDEEM. Positions 1 to 47 are disordered; that stretch reads MDFDDHDDGDEEMPPMPVSSSYETPPQHGLAGGGMAPKPPGEIGSRV. The ZF-HD dimerization-type; degenerate zinc finger occupies 57-106; it reads YRECLKNHAVGIGGHAVDGCGEFMAAGEEGTIDALRCAACNCHRNFHRKE. The interval 168 to 190 is disordered; that stretch reads RPLALPSTSHSGRDDGDDLSGMV. A DNA-binding region (homeobox) is located at residues 215-278; the sequence is KKRFRTKFTQ…NNKHTLGKKL (64 aa).

Homo- and heterodimer with other ZFHD proteins.

It localises to the nucleus. Functionally, putative transcription factor. This Oryza sativa subsp. japonica (Rice) protein is Zinc-finger homeodomain protein 1 (ZHD1).